A 128-amino-acid polypeptide reads, in one-letter code: NADH-ubiquinone oxidoreductase chain 3 (128 aa).

3 consecutive transmembrane segments (helical) span residues 3 to 23 (TIYT…NYLI), 52 to 72 (VAFI…SSIL), and 84 to 104 (YGLS…VYEI).

Belongs to the complex I subunit 3 family.

Its subcellular location is the mitochondrion membrane. It catalyses the reaction a ubiquinone + NADH + 5 H(+)(in) = a ubiquinol + NAD(+) + 4 H(+)(out). Functionally, core subunit of the mitochondrial membrane respiratory chain NADH dehydrogenase (Complex I) that is believed to belong to the minimal assembly required for catalysis. Complex I functions in the transfer of electrons from NADH to the respiratory chain. The immediate electron acceptor for the enzyme is believed to be ubiquinone. The chain is NADH-ubiquinone oxidoreductase chain 3 (ND3) from Debaryomyces hansenii (strain ATCC 36239 / CBS 767 / BCRC 21394 / JCM 1990 / NBRC 0083 / IGC 2968) (Yeast).